We begin with the raw amino-acid sequence, 157 residues long: S-ribosylhomocysteine lyase (157 aa).

Fe cation is bound by residues His-54, His-58, and Cys-126.

Belongs to the LuxS family. In terms of assembly, homodimer. Fe cation is required as a cofactor.

It catalyses the reaction S-(5-deoxy-D-ribos-5-yl)-L-homocysteine = (S)-4,5-dihydroxypentane-2,3-dione + L-homocysteine. Involved in the synthesis of autoinducer 2 (AI-2) which is secreted by bacteria and is used to communicate both the cell density and the metabolic potential of the environment. The regulation of gene expression in response to changes in cell density is called quorum sensing. Catalyzes the transformation of S-ribosylhomocysteine (RHC) to homocysteine (HC) and 4,5-dihydroxy-2,3-pentadione (DPD). This is S-ribosylhomocysteine lyase from Bacillus cytotoxicus (strain DSM 22905 / CIP 110041 / 391-98 / NVH 391-98).